The following is a 421-amino-acid chain: Subtilisin-like protease 2 (421 aa).

An N-terminal signal peptide occupies residues 1-16 (MQLLNFGLLLLPFVAG). A propeptide spanning residues 17 to 122 (DLAPQPEPLL…VHPDQHVYLA (106 aa)) is cleaved from the precursor. An Inhibitor I9 domain is found at 36–122 (QYIVTLKEGL…VHPDQHVYLA (87 aa)). Residues 131-421 (RWGLGYMSSK…ERKFTLPKYF (291 aa)) form the Peptidase S8 domain. Catalysis depends on charge relay system residues Asp169 and His201. N-linked (GlcNAc...) asparagine glycans are attached at residues Asn248, Asn261, and Asn348. Ser357 (charge relay system) is an active-site residue. An N-linked (GlcNAc...) asparagine glycan is attached at Asn388.

Belongs to the peptidase S8 family.

It is found in the secreted. Its function is as follows. Secreted subtilisin-like serine protease with keratinolytic activity that contributes to pathogenicity. This is Subtilisin-like protease 2 (SUB2) from Trichophyton tonsurans (Scalp ringworm fungus).